A 197-amino-acid chain; its full sequence is Protein GrpE (197 aa).

Residues 1 to 27 (MTKQEKAENQEKPTEETVEETPKKETP) are compositionally biased toward basic and acidic residues. Residues 1–50 (MTKQEKAENQEKPTEETVEETPKKETPFEPVMEADEVEETTEAQAPVEEA) form a disordered region. Positions 32-41 (MEADEVEETT) are enriched in acidic residues.

Belongs to the GrpE family. Homodimer.

It is found in the cytoplasm. In terms of biological role, participates actively in the response to hyperosmotic and heat shock by preventing the aggregation of stress-denatured proteins, in association with DnaK and GrpE. It is the nucleotide exchange factor for DnaK and may function as a thermosensor. Unfolded proteins bind initially to DnaJ; upon interaction with the DnaJ-bound protein, DnaK hydrolyzes its bound ATP, resulting in the formation of a stable complex. GrpE releases ADP from DnaK; ATP binding to DnaK triggers the release of the substrate protein, thus completing the reaction cycle. Several rounds of ATP-dependent interactions between DnaJ, DnaK and GrpE are required for fully efficient folding. The polypeptide is Protein GrpE (Latilactobacillus sakei (Lactobacillus sakei)).